The chain runs to 521 residues: Ankyrin repeat and death domain-containing protein 1B (521 aa).

10 ANK repeats span residues 60 to 89 (AIERSFQNAAKSSNLDLMEKLFEKKVNINA), 93 to 122 (MNRTALHFAVGRNSLSAVDFLLSHKARVDV), 126 to 155 (HGLTVIHLAAWSGSFEIMLMLVKAGADQRA), 159 to 190 (EGMNALHLAAQNNNLHIVDYLIHDLHLHDLNQ), 194 to 223 (RGRKPFHLAAERGHVEMIEKLIFLNLHTSE), 227 to 256 (DGNTALHLAAMHGHSPAVQVLLTQWSEVNE), 260 to 289 (LNVSALQTATRNGHTALVNFLLGENADLQQ), 293 to 322 (SKEPPLHLAVINNRPAVVNSLLSARHDVDV), 326 to 355 (RRQTPLHVAADLGNVELVETLLKAGCNLKI), and 359 to 388 (QGKTALAVAARSQHSLVVDMLIKAERYYAW). The Death domain maps to 420 to 508 (TLLWNLAYRQ…ELAEKIRQFK (89 aa)).

The polypeptide is Ankyrin repeat and death domain-containing protein 1B (Ankdd1b) (Mus musculus (Mouse)).